The primary structure comprises 323 residues: Sphingolipid delta(4)-desaturase DES1 (323 aa).

Glycine 2 carries the N-myristoyl glycine lipid modification. 2 consecutive transmembrane segments (helical) span residues 41-61 (HNLI…FYLV) and 68-88 (WVIF…TLAI). Positions 89–93 (HEISH) match the Histidine box-1 motif. Residues 104–124 (WNRWFGMFANLSLGVPYSISF) form a helical membrane-spanning segment. A Histidine box-2 motif is present at residues 128–132 (HMDHH). Transmembrane regions (helical) follow at residues 152-172 (FFCT…FYAF), 184-204 (YLEI…YYVF), and 209-229 (LVYM…SGHF). Residues 259–263 (HNEHH) carry the Histidine box-3 motif. Position 307 is a phosphoserine (serine 307).

The protein belongs to the fatty acid desaturase type 1 family. DEGS subfamily. In terms of assembly, interacts with RLBP1; the interaction increases synthesis of chromophore-precursors by DEGS1. Post-translationally, myristoylation can target the enzyme to the mitochondria leading to an increase in ceramide levels. In terms of tissue distribution, detected in testis. Detected in pachytene spermatocytes and round spermatids. Expressed in retina and retinal pigment epithelium by Mueller cells (at protein level).

It is found in the mitochondrion membrane. Its subcellular location is the endoplasmic reticulum membrane. The catalysed reaction is an N-acylsphinganine + 2 Fe(II)-[cytochrome b5] + O2 + 2 H(+) = an N-acylsphing-4-enine + 2 Fe(III)-[cytochrome b5] + 2 H2O. The enzyme catalyses all-trans-retinol = 11-cis-retinol. It carries out the reaction all-trans-retinol = 9-cis-retinol. It catalyses the reaction all-trans-retinol = 13-cis-retinol. The catalysed reaction is 11-cis-retinol = 13-cis-retinol. The enzyme catalyses 11-cis-retinol = 9-cis-retinol. In terms of biological role, has sphingolipid-delta-4-desaturase activity. Converts D-erythro-sphinganine to D-erythro-sphingosine (E-sphing-4-enine). Catalyzes the equilibrium isomerization of retinols. The polypeptide is Sphingolipid delta(4)-desaturase DES1 (Mus musculus (Mouse)).